Reading from the N-terminus, the 172-residue chain is Large ribosomal subunit protein uL10 (172 aa).

Belongs to the universal ribosomal protein uL10 family. Part of the ribosomal stalk of the 50S ribosomal subunit. The N-terminus interacts with L11 and the large rRNA to form the base of the stalk. The C-terminus forms an elongated spine to which L12 dimers bind in a sequential fashion forming a multimeric L10(L12)X complex.

Forms part of the ribosomal stalk, playing a central role in the interaction of the ribosome with GTP-bound translation factors. The protein is Large ribosomal subunit protein uL10 of Brucella anthropi (strain ATCC 49188 / DSM 6882 / CCUG 24695 / JCM 21032 / LMG 3331 / NBRC 15819 / NCTC 12168 / Alc 37) (Ochrobactrum anthropi).